A 186-amino-acid polypeptide reads, in one-letter code: Peptidyl-tRNA hydrolase (186 aa).

Tyr-14 is a binding site for tRNA. His-19 (proton acceptor) is an active-site residue. Residues Phe-64, Asn-66, and Asn-112 each coordinate tRNA.

It belongs to the PTH family. As to quaternary structure, monomer.

The protein resides in the cytoplasm. The catalysed reaction is an N-acyl-L-alpha-aminoacyl-tRNA + H2O = an N-acyl-L-amino acid + a tRNA + H(+). Its function is as follows. Hydrolyzes ribosome-free peptidyl-tRNAs (with 1 or more amino acids incorporated), which drop off the ribosome during protein synthesis, or as a result of ribosome stalling. In terms of biological role, catalyzes the release of premature peptidyl moieties from peptidyl-tRNA molecules trapped in stalled 50S ribosomal subunits, and thus maintains levels of free tRNAs and 50S ribosomes. The sequence is that of Peptidyl-tRNA hydrolase from Listeria monocytogenes serotype 4b (strain CLIP80459).